A 258-amino-acid polypeptide reads, in one-letter code: RIO-type serine/threonine-protein kinase Rio1 (258 aa).

Residues 49-258 (TAMGGVISTG…EEMLKEVKGE (210 aa)) form the Protein kinase domain. ATP contacts are provided by residues 55 to 63 (ISTGKEANV) and Lys80. Position 108 is a phosphoserine; by autocatalysis (Ser108). Residues Glu148 and Ile150 each contribute to the ATP site. The Proton acceptor role is filled by Asp196. Residues Tyr200, Asn201, and Asp212 each contribute to the ATP site. Mg(2+) is bound by residues Asn201 and Asp212. Asp212 (4-aspartylphosphate intermediate) is an active-site residue.

Belongs to the protein kinase superfamily. RIO-type Ser/Thr kinase family. It depends on Mg(2+) as a cofactor.

The catalysed reaction is L-seryl-[protein] + ATP = O-phospho-L-seryl-[protein] + ADP + H(+). It catalyses the reaction L-threonyl-[protein] + ATP = O-phospho-L-threonyl-[protein] + ADP + H(+). Its function is as follows. Autophosphorylation of the rio1 protein is not necessary for maintenance of kinase activity. Prefers ATP over GTP. The yeast ortholog is involved in ribosome biogenesis. Despite the protein kinase domain is proposed to act predominantly as an ATPase. The protein is RIO-type serine/threonine-protein kinase Rio1 (rio1) of Archaeoglobus fulgidus (strain ATCC 49558 / DSM 4304 / JCM 9628 / NBRC 100126 / VC-16).